Reading from the N-terminus, the 778-residue chain is Endonuclease MutS2 (778 aa).

ATP is bound at residue 328–335 (GPNTGGKT). Residues 702 to 777 (LDLRGKRYEE…GSGATIVTFK (76 aa)) form the Smr domain.

This sequence belongs to the DNA mismatch repair MutS family. MutS2 subfamily. As to quaternary structure, homodimer. Binds to stalled ribosomes, contacting rRNA.

Endonuclease that is involved in the suppression of homologous recombination and thus may have a key role in the control of bacterial genetic diversity. In terms of biological role, acts as a ribosome collision sensor, splitting the ribosome into its 2 subunits. Detects stalled/collided 70S ribosomes which it binds and splits by an ATP-hydrolysis driven conformational change. Acts upstream of the ribosome quality control system (RQC), a ribosome-associated complex that mediates the extraction of incompletely synthesized nascent chains from stalled ribosomes and their subsequent degradation. Probably generates substrates for RQC. The polypeptide is Endonuclease MutS2 (Streptococcus pneumoniae (strain P1031)).